The sequence spans 981 residues: Peroxisomal ATPase PEX6 (981 aa).

R119 is subject to Omega-N-methylarginine. Residues 471–478 (GPPGSGKT) and 745–752 (GPPGTGKT) contribute to the ATP site.

The protein belongs to the AAA ATPase family. In terms of assembly, interacts with PEX1; forming the PEX1-PEX6 AAA ATPase complex, which is composed of a heterohexamer formed by a trimer of PEX1-PEX6 dimers. Interacts with PEX26; interaction is direct and promotes recruitment to peroxisomal membranes. Interacts with ZFAND6. In the teeth, expressed in ameloblasts and odontoblasts. Expressed in the retina, at higher levels in the ganglion cell layer and photoreceptor layer at the joint between the outer and inner segments.

Its subcellular location is the cytoplasm. It is found in the cytosol. The protein localises to the peroxisome membrane. It localises to the cell projection. The protein resides in the cilium. Its subcellular location is the photoreceptor outer segment. The enzyme catalyses ATP + H2O = ADP + phosphate + H(+). Component of the PEX1-PEX6 AAA ATPase complex, a protein dislocase complex that mediates the ATP-dependent extraction of the PEX5 receptor from peroxisomal membranes, an essential step for PEX5 recycling. Specifically recognizes PEX5 monoubiquitinated at 'Cys-11', and pulls it out of the peroxisome lumen through the PEX2-PEX10-PEX12 retrotranslocation channel. Extraction by the PEX1-PEX6 AAA ATPase complex is accompanied by unfolding of the TPR repeats and release of bound cargo from PEX5. This chain is Peroxisomal ATPase PEX6, found in Mus musculus (Mouse).